An 88-amino-acid chain; its full sequence is MSDVAAILKVMPESPEIDLEALKETIKNTIDADSFERIEEEPIGFGLIALNVTIVVDDGEGGTEPAEEALAALDEIQSVEVTDVRRLM.

It belongs to the EF-1-beta/EF-1-delta family.

Functionally, promotes the exchange of GDP for GTP in EF-1-alpha/GDP, thus allowing the regeneration of EF-1-alpha/GTP that could then be used to form the ternary complex EF-1-alpha/GTP/AAtRNA. The polypeptide is Elongation factor 1-beta (Methanosphaera stadtmanae (strain ATCC 43021 / DSM 3091 / JCM 11832 / MCB-3)).